We begin with the raw amino-acid sequence, 295 residues long: Protease HtpX (295 aa).

2 consecutive transmembrane segments (helical) span residues 4-24 (ILLF…TLSL) and 41-61 (SSLL…SLFI). Histidine 147 provides a ligand contact to Zn(2+). Residue glutamate 148 is part of the active site. Position 151 (histidine 151) interacts with Zn(2+). The next 2 helical transmembrane spans lie at 158–178 (VTLA…ARII) and 199–219 (VATI…VMWF). A Zn(2+)-binding site is contributed by glutamate 224.

Belongs to the peptidase M48B family. The cofactor is Zn(2+).

The protein resides in the cell inner membrane. The sequence is that of Protease HtpX from Pseudomonas putida (strain W619).